A 101-amino-acid chain; its full sequence is A-type ATP synthase subunit F (101 aa).

The protein belongs to the V-ATPase F subunit family. Has multiple subunits with at least A(3), B(3), C, D, E, F, H, I and proteolipid K(x).

It is found in the cell membrane. In terms of biological role, component of the A-type ATP synthase that produces ATP from ADP in the presence of a proton gradient across the membrane. In Methanosarcina acetivorans (strain ATCC 35395 / DSM 2834 / JCM 12185 / C2A), this protein is A-type ATP synthase subunit F.